The primary structure comprises 78 residues: Small ribosomal subunit protein bS18 (78 aa).

The protein belongs to the bacterial ribosomal protein bS18 family. As to quaternary structure, part of the 30S ribosomal subunit. Forms a tight heterodimer with protein bS6.

In terms of biological role, binds as a heterodimer with protein bS6 to the central domain of the 16S rRNA, where it helps stabilize the platform of the 30S subunit. The chain is Small ribosomal subunit protein bS18 from Beutenbergia cavernae (strain ATCC BAA-8 / DSM 12333 / CCUG 43141 / JCM 11478 / NBRC 16432 / NCIMB 13614 / HKI 0122).